The primary structure comprises 946 residues: Increased sodium tolerance protein 2 (946 aa).

Topologically, residues 1–121 are cytoplasmic; sequence MSQTITSLDP…SNLTNNPKQS (121 aa). The helical transmembrane segment at 122–142 threads the bilayer; sequence LYFAFLQNYIKWLIPFSFFGL. Topologically, residues 143-153 are extracellular; that stretch reads SIRFLSNFTYE. A helical membrane pass occupies residues 154 to 174; that stretch reads FNSTYSLFAILWTLSFTAFWL. The Cytoplasmic portion of the chain corresponds to 175-217; the sequence is YKYEPFWSDRLSKYSSFSTIEFLQDKQKAQKKASSVIMLKKCC. The helical transmembrane segment at 218–238 threads the bilayer; it reads FIPVALLFGAILLSFQLYCFA. The Extracellular segment spans residues 239–253; sequence LEIFIKQIYNGPMIS. A helical membrane pass occupies residues 254–274; that stretch reads ILSFLPTILICTFTPVLTVIY. Residues 275–302 lie on the Cytoplasmic side of the membrane; it reads NKYFVEPMTKWENHSSVVNAKKSKEAKN. The helical transmembrane segment at 303–323 threads the bilayer; it reads FVIIFLSSYVPLLITLFLYLP. Residues 324–447 are Extracellular-facing; the sequence is MGHLLTAEIR…DANFKKLLLQ (124 aa). The chain crosses the membrane as a helical span at residues 448-468; that stretch reads FGYLVMFSTIWPLAPFICLIV. Residues 469–505 are Cytoplasmic-facing; that stretch reads NLIVYQVDLRKAVLYSKPEYFPFPIYDKPSSVSNTQK. The helical transmembrane segment at 506–526 threads the bilayer; the sequence is LTVGLWNSVLVMFSILGCVIT. Topologically, residues 527–563 are extracellular; that stretch reads ATLTYMYQSCNIPGVGAHTSIHTNKAWYLANPINHSW. Residues 564–584 traverse the membrane as a helical segment; that stretch reads INIVLYAVFIEHVSVAIFFLF. Residues 585–946 are Cytoplasmic-facing; it reads SSILKSSHDD…GLLHKLKKKL (362 aa). Disordered regions lie at residues 617–638 and 665–718; these read EKIP…RKGS and THAN…TEKR. A compositionally biased stretch (basic and acidic residues) spans 628 to 638; the sequence is NEKELVQRKGS. At serine 638 the chain carries Phosphoserine. Residues 671–689 are compositionally biased toward low complexity; the sequence is PSSLSSASSPSLSSSSSSS. The residue at position 701 (threonine 701) is a Phosphothreonine. Phosphoserine is present on residues serine 704 and serine 720. Threonine 726 is subject to Phosphothreonine. Serine 729 carries the phosphoserine modification. Tyrosine 730 bears the Phosphotyrosine mark. Serine 757 bears the Phosphoserine mark. The interval 759–784 is disordered; sequence RDAKSSAESSNATNNNTLGTESKLLP. Positions 764 to 775 are enriched in low complexity; it reads SAESSNATNNNT. Phosphoserine is present on residues serine 793, serine 844, and serine 847. Residues 846–946 are disordered; the sequence is VSVATEQTKK…GLLHKLKKKL (101 aa). The residue at position 850 (threonine 850) is a Phosphothreonine. Residues 859 to 868 are compositionally biased toward polar residues; the sequence is STKNGPSRSI. Residues 884–893 show a composition bias toward low complexity; it reads TTTTTTTDAT. Residues 895-905 show a composition bias toward basic residues; the sequence is PHHHHHHHRHR. Residues 916–927 show a composition bias toward low complexity; it reads SKTTESSSSSSA. The segment covering 931–946 has biased composition (basic residues); sequence KPKHKKGLLHKLKKKL.

In terms of assembly, interacts with BTN2.

The protein localises to the cell membrane. Its function is as follows. May be involved in ion homeostasis together with BTN1 or BTN2. In Saccharomyces cerevisiae (strain ATCC 204508 / S288c) (Baker's yeast), this protein is Increased sodium tolerance protein 2 (IST2).